The sequence spans 426 residues: Serine--tRNA ligase (426 aa).

233–235 (TAE) is a binding site for L-serine. 264-266 (RAE) lines the ATP pocket. Glutamate 287 contacts L-serine. 351 to 354 (EISS) serves as a coordination point for ATP. An L-serine-binding site is contributed by serine 387.

It belongs to the class-II aminoacyl-tRNA synthetase family. Type-1 seryl-tRNA synthetase subfamily. As to quaternary structure, homodimer. The tRNA molecule binds across the dimer.

It is found in the cytoplasm. The catalysed reaction is tRNA(Ser) + L-serine + ATP = L-seryl-tRNA(Ser) + AMP + diphosphate + H(+). It catalyses the reaction tRNA(Sec) + L-serine + ATP = L-seryl-tRNA(Sec) + AMP + diphosphate + H(+). Its pathway is aminoacyl-tRNA biosynthesis; selenocysteinyl-tRNA(Sec) biosynthesis; L-seryl-tRNA(Sec) from L-serine and tRNA(Sec): step 1/1. In terms of biological role, catalyzes the attachment of serine to tRNA(Ser). Is also able to aminoacylate tRNA(Sec) with serine, to form the misacylated tRNA L-seryl-tRNA(Sec), which will be further converted into selenocysteinyl-tRNA(Sec). This is Serine--tRNA ligase from Clostridium novyi (strain NT).